Here is a 338-residue protein sequence, read N- to C-terminus: MSSLRLLISDSYDPWFNLAVEECIFRQMSPDQRVLFLWRNADTVVIGRAQNPWKECNTRRMEQDGVKLARRSSGGGAVFHDLGNTCFTFMAGKPEYDKTISTQIILNALASLGIQATASGRNDLVVIKDDGERKVSGSAYKETKDRGFHHGTLLLNADLNRLADYLNPDPKKLQAKGITSVRSRVTNLVELLPGINHEKICAAIEQAFFNYYDEKVFAEIISPQALPDLPGFAEQFAKQSSWEWNFGQAPAFSHLVDTRFVWGGIELHFDVLHGAIDRCQIFTDSLNPAPLEALAERLQGVEYRPAAIDAVCLQLSDDFPESQAELLQVQCWLAEVLR.

Positions 29–216 constitute a BPL/LPL catalytic domain; sequence SPDQRVLFLW…AFFNYYDEKV (188 aa). ATP contacts are provided by residues R71, 76–79, and K134; that span reads GAVF. K134 lines the (R)-lipoate pocket.

It belongs to the LplA family. Monomer.

The protein resides in the cytoplasm. The enzyme catalyses L-lysyl-[lipoyl-carrier protein] + (R)-lipoate + ATP = N(6)-[(R)-lipoyl]-L-lysyl-[lipoyl-carrier protein] + AMP + diphosphate + H(+). It functions in the pathway protein modification; protein lipoylation via exogenous pathway; protein N(6)-(lipoyl)lysine from lipoate: step 1/2. It participates in protein modification; protein lipoylation via exogenous pathway; protein N(6)-(lipoyl)lysine from lipoate: step 2/2. Catalyzes both the ATP-dependent activation of exogenously supplied lipoate to lipoyl-AMP and the transfer of the activated lipoyl onto the lipoyl domains of lipoate-dependent enzymes. The chain is Lipoate-protein ligase A from Yersinia enterocolitica serotype O:8 / biotype 1B (strain NCTC 13174 / 8081).